The chain runs to 256 residues: uncharacterized protein (256 aa).

The N-terminal stretch at 1–22 is a signal peptide; the sequence is MKSIKRIGLCISLLILSIFVTS. Cys23 is lipidated: N-palmitoyl cysteine. Cys23 carries S-diacylglycerol cysteine lipidation.

It belongs to the staphylococcal tandem lipoprotein family.

It is found in the cell membrane. This is an uncharacterized protein from Staphylococcus aureus (strain USA300).